Here is a 78-residue protein sequence, read N- to C-terminus: D-alanyl carrier protein (78 aa).

The 78-residue stretch at 1–78 folds into the Carrier domain; it reads MEFREQVLDL…KIVEALEELR (78 aa). O-(pantetheine 4'-phosphoryl)serine is present on S36.

Belongs to the DltC family. Post-translationally, 4'-phosphopantetheine is transferred from CoA to a specific serine of apo-DCP.

The protein resides in the cytoplasm. It participates in cell wall biogenesis; lipoteichoic acid biosynthesis. Carrier protein involved in the D-alanylation of lipoteichoic acid (LTA). The loading of thioester-linked D-alanine onto DltC is catalyzed by D-alanine--D-alanyl carrier protein ligase DltA. The DltC-carried D-alanyl group is further transferred to cell membrane phosphatidylglycerol (PG) by forming an ester bond, probably catalyzed by DltD. D-alanylation of LTA plays an important role in modulating the properties of the cell wall in Gram-positive bacteria, influencing the net charge of the cell wall. This Staphylococcus epidermidis (strain ATCC 35984 / DSM 28319 / BCRC 17069 / CCUG 31568 / BM 3577 / RP62A) protein is D-alanyl carrier protein.